We begin with the raw amino-acid sequence, 277 residues long: Putative hydroxypyruvate isomerase (277 aa).

Catalysis depends on proton donor/acceptor residues glutamate 150 and glutamate 249.

It belongs to the hyi family.

The catalysed reaction is 3-hydroxypyruvate = 2-hydroxy-3-oxopropanoate. Catalyzes the reversible isomerization between hydroxypyruvate and 2-hydroxy-3-oxopropanoate (also termed tartronate semialdehyde). In Homo sapiens (Human), this protein is Putative hydroxypyruvate isomerase (HYI).